Here is an 83-residue protein sequence, read N- to C-terminus: MKASMFLALAGLVLLFVVCYASESEEKEFPRELISKIFAVDDFKGEERECKGFGKSCVPGKNECCSGYACNSRDKWCKVLLGK.

A signal peptide spans 1-21 (MKASMFLALAGLVLLFVVCYA). Residues 22-48 (SESEEKEFPRELISKIFAVDDFKGEER) constitute a propeptide that is removed on maturation. 3 cysteine pairs are disulfide-bonded: Cys-50–Cys-65, Cys-57–Cys-70, and Cys-64–Cys-77. Leu-81 carries the post-translational modification Leucine amide.

Belongs to the neurotoxin 10 (Hwtx-1) family. 14 (Hntx-1) subfamily. Monomer. Expressed by the venom gland.

It localises to the secreted. Its function is as follows. Weakly blocks the rat SCN2A/SCN1B (Nav1.2/beta-1) sodium channel (IC(50)=68 uM) and the insect sodium channel para/tipE (IC(50)=4.3 uM), without altering the activation or inactivation kinetics (depressant toxin). This chain is Mu-theraphotoxin-Hhn2b 1, found in Cyriopagopus hainanus (Chinese bird spider).